A 420-amino-acid polypeptide reads, in one-letter code: DNA repair protein NreA (420 aa).

The PIP motif signature appears at 413–420 (QTDIFDFA).

The protein belongs to the Nre family. As to quaternary structure, interacts with the DNA polymerase sliding clamp (PCNA) via the PIP (PCNA-interacting peptide) motif.

Its function is as follows. Involved in DNA damage repair. Works together with the UvrABC proteins in repairing DNA damage resulting from exposure to the DNA damaging agent mitomycin C (MMC). The chain is DNA repair protein NreA from Haloferax volcanii (strain ATCC 29605 / DSM 3757 / JCM 8879 / NBRC 14742 / NCIMB 2012 / VKM B-1768 / DS2) (Halobacterium volcanii).